The following is a 406-amino-acid chain: Sprouty-related, EVH1 domain-containing protein 1 (406 aa).

The WH1 domain occupies 3-120 (GEQEPDDSYA…RGIRRAIEDL (118 aa)). The segment at 124 to 154 (LPASCHGESETSEDGPQVNKEDHYSTHNNDH) is disordered. Residues 142 to 154 (NKEDHYSTHNNDH) show a composition bias toward basic and acidic residues. Residues 195–247 (PIRHVSFQDEDEIVRINPRDMIIRRYADYRHPDIFRNDVDREEPEDVTFFTKT) enclose the KBD domain. The region spanning 296-404 (SCVYCQERFN…CGCCGGKHKA (109 aa)) is the SPR domain.

Palmitoylated by ZDHHC17/HIP14. Post-translationally, ubiquitinated. In terms of processing, phosphorylated on tyrosine.

Its subcellular location is the cell membrane. Tyrosine kinase substrate that inhibits growth-factor-mediated activation of MAP kinase. This Xenopus tropicalis (Western clawed frog) protein is Sprouty-related, EVH1 domain-containing protein 1 (spred1).